Reading from the N-terminus, the 548-residue chain is Probable malate:quinone oxidoreductase (548 aa).

Residues 521–548 are disordered; it reads DKPQAADSTPKPQLKPQPVQKEVADIAL. A compositionally biased stretch (low complexity) spans 530 to 541; it reads PKPQLKPQPVQK.

The protein belongs to the MQO family. FAD serves as cofactor.

It carries out the reaction (S)-malate + a quinone = a quinol + oxaloacetate. Its pathway is carbohydrate metabolism; tricarboxylic acid cycle; oxaloacetate from (S)-malate (quinone route): step 1/1. The sequence is that of Probable malate:quinone oxidoreductase from Escherichia coli (strain 55989 / EAEC).